We begin with the raw amino-acid sequence, 82 residues long: Sulfur carrier protein TusA (82 aa).

Residue Cys-20 is the Cysteine persulfide intermediate of the active site.

It belongs to the sulfur carrier protein TusA family.

Its subcellular location is the cytoplasm. Sulfur carrier protein which probably makes part of a sulfur-relay system. The sequence is that of Sulfur carrier protein TusA from Aeromonas hydrophila subsp. hydrophila (strain ATCC 7966 / DSM 30187 / BCRC 13018 / CCUG 14551 / JCM 1027 / KCTC 2358 / NCIMB 9240 / NCTC 8049).